The chain runs to 301 residues: (R)-2-haloacid dehalogenase (301 aa).

It belongs to the HAD-like hydrolase superfamily. S-2-haloalkanoic acid dehalogenase family. Homotetramer.

The catalysed reaction is an (R)-2-haloacid + H2O = a (2S)-2-hydroxycarboxylate + a halide anion + H(+). Its function is as follows. Catalyzes the hydrolytic dehalogenation of small (R)-2-haloalkanoic acids to yield the corresponding (S)-2-hydroxyalkanoic acids. Acts on acids of short chain lengths, C(2) to C(4), with inversion of configuration at C-2. The sequence is that of (R)-2-haloacid dehalogenase (hadD) from Pseudomonas putida (Arthrobacter siderocapsulatus).